Here is a 194-residue protein sequence, read N- to C-terminus: Leucyl/phenylalanyl-tRNA--protein transferase (194 aa).

This sequence belongs to the L/F-transferase family.

The protein localises to the cytoplasm. The enzyme catalyses N-terminal L-lysyl-[protein] + L-leucyl-tRNA(Leu) = N-terminal L-leucyl-L-lysyl-[protein] + tRNA(Leu) + H(+). It carries out the reaction N-terminal L-arginyl-[protein] + L-leucyl-tRNA(Leu) = N-terminal L-leucyl-L-arginyl-[protein] + tRNA(Leu) + H(+). The catalysed reaction is L-phenylalanyl-tRNA(Phe) + an N-terminal L-alpha-aminoacyl-[protein] = an N-terminal L-phenylalanyl-L-alpha-aminoacyl-[protein] + tRNA(Phe). Functionally, functions in the N-end rule pathway of protein degradation where it conjugates Leu, Phe and, less efficiently, Met from aminoacyl-tRNAs to the N-termini of proteins containing an N-terminal arginine or lysine. This chain is Leucyl/phenylalanyl-tRNA--protein transferase, found in Chlorobaculum tepidum (strain ATCC 49652 / DSM 12025 / NBRC 103806 / TLS) (Chlorobium tepidum).